The chain runs to 930 residues: Isoleucine--tRNA ligase (930 aa).

A 'HIGH' region motif is present at residues 57-67 (PYANGNIHVGH). Glu554 lines the L-isoleucyl-5'-AMP pocket. The 'KMSKS' region signature appears at 595 to 599 (KMSKS). Lys598 provides a ligand contact to ATP. Residues Cys888, Cys891, Cys908, and Cys911 each coordinate Zn(2+).

The protein belongs to the class-I aminoacyl-tRNA synthetase family. IleS type 1 subfamily. As to quaternary structure, monomer. Zn(2+) is required as a cofactor.

The protein localises to the cytoplasm. It catalyses the reaction tRNA(Ile) + L-isoleucine + ATP = L-isoleucyl-tRNA(Ile) + AMP + diphosphate. Its function is as follows. Catalyzes the attachment of isoleucine to tRNA(Ile). As IleRS can inadvertently accommodate and process structurally similar amino acids such as valine, to avoid such errors it has two additional distinct tRNA(Ile)-dependent editing activities. One activity is designated as 'pretransfer' editing and involves the hydrolysis of activated Val-AMP. The other activity is designated 'posttransfer' editing and involves deacylation of mischarged Val-tRNA(Ile). This chain is Isoleucine--tRNA ligase, found in Streptococcus pneumoniae (strain Taiwan19F-14).